The chain runs to 714 residues: Fatty acid oxidation complex subunit alpha (714 aa).

An enoyl-CoA hydratase region spans residues 1–190; sequence MEMASAFTLN…KLGLVDDVVP (190 aa). Residues 306-714 form a 3-hydroxyacyl-CoA dehydrogenase region; the sequence is APLNSVGILG…FWKTTATDLQ (409 aa).

In the N-terminal section; belongs to the enoyl-CoA hydratase/isomerase family. This sequence in the central section; belongs to the 3-hydroxyacyl-CoA dehydrogenase family. As to quaternary structure, heterotetramer of two alpha chains (FadJ) and two beta chains (FadI).

The protein resides in the cytoplasm. The enzyme catalyses a (3S)-3-hydroxyacyl-CoA = a (2E)-enoyl-CoA + H2O. It catalyses the reaction a 4-saturated-(3S)-3-hydroxyacyl-CoA = a (3E)-enoyl-CoA + H2O. The catalysed reaction is a (3S)-3-hydroxyacyl-CoA + NAD(+) = a 3-oxoacyl-CoA + NADH + H(+). It carries out the reaction (3S)-3-hydroxybutanoyl-CoA = (3R)-3-hydroxybutanoyl-CoA. Its pathway is lipid metabolism; fatty acid beta-oxidation. Functionally, catalyzes the formation of a hydroxyacyl-CoA by addition of water on enoyl-CoA. Also exhibits 3-hydroxyacyl-CoA epimerase and 3-hydroxyacyl-CoA dehydrogenase activities. In Escherichia coli O7:K1 (strain IAI39 / ExPEC), this protein is Fatty acid oxidation complex subunit alpha.